Consider the following 369-residue polypeptide: Xylene/toluene monooxygenase hydroxylase component XylM (369 aa).

The next 3 helical transmembrane spans lie at 8 to 28 (LIPVVTACGLIGFYYGGYWVW), 60 to 80 (LTQYLQLPLMIGLYGLLVFGV), and 91 to 111 (LQVAGCILSLAWLSGVPTLPV). Residues H113, H117, H143, H147, and H148 each contribute to the Fe cation site. A helical membrane pass occupies residues 207-227 (VALLLALPGLVSYLGGPALGL). Fe cation is bound by residues H282, H285, and H286. A helical transmembrane segment spans residues 305–325 (MPSLFVCFLLGLIPPLWFALI).

The protein belongs to the fatty acid desaturase type 1 family. AlkB subfamily. As to quaternary structure, the xylene/toluene monooxygenase is composed of two subunits: the electron transfer component XylA and the hydroxylase component XylM. Fe(2+) is required as a cofactor.

The protein localises to the cell inner membrane. The enzyme catalyses m-xylene + 2 reduced [2Fe-2S]-[ferredoxin] + O2 + 2 H(+) = 3-methylbenzyl alcohol + 2 oxidized [2Fe-2S]-[ferredoxin] + H2O. The catalysed reaction is p-xylene + 2 reduced [2Fe-2S]-[ferredoxin] + O2 + 2 H(+) = 4-methylbenzyl alcohol + 2 oxidized [2Fe-2S]-[ferredoxin] + H2O. It carries out the reaction toluene + 2 reduced [2Fe-2S]-[ferredoxin] + O2 + 2 H(+) = benzyl alcohol + 2 oxidized [2Fe-2S]-[ferredoxin] + H2O. Functionally, component of a monooxygenase that catalyzes the first step in the degradation of xylenes and toluenes. XylM catalyzes the hydroxylation of the methyl side chain of xylenes and toluenes. The electrons are provided by the electron transfer component XylA. The best substrates are m-xylene and p-xylene, followed by toluene. Shows weak activity with o-xylene. In vitro, is also active with substituted compounds, such as chlorotoluenes. Cannot use benzyl alcohol. The chain is Xylene/toluene monooxygenase hydroxylase component XylM from Pseudomonas putida (Arthrobacter siderocapsulatus).